A 901-amino-acid chain; its full sequence is HTH-type transcriptional regulator MalT (901 aa).

39-46 contacts ATP; sequence SPAGYGKT. The HTH luxR-type domain maps to 829–894; it reads ELIRTSPLTQ…AAVQHAQKLL (66 aa). The H-T-H motif DNA-binding region spans 853 to 872; that stretch reads NEQIAGELEVAATTIKTHIR.

The protein belongs to the MalT family. In terms of assembly, monomer in solution. Oligomerizes to an active state in the presence of the positive effectors ATP and maltotriose.

Its activity is regulated as follows. Activated by ATP and maltotriose, which are both required for DNA binding. Functionally, positively regulates the transcription of the maltose regulon whose gene products are responsible for uptake and catabolism of malto-oligosaccharides. Specifically binds to the promoter region of its target genes, recognizing a short DNA motif called the MalT box. The protein is HTH-type transcriptional regulator MalT of Escherichia coli O6:K15:H31 (strain 536 / UPEC).